Consider the following 161-residue polypeptide: MVPKLFTSQICLLLLLGLLAVEGSLHVKPPQFTWAQWFETQHINMTSQQCTNAMRVINNYQRRCKNQNTFLLTTFANVVNVCGNPNMTCPSNKTRKNCHHSGSQVPLIHCNLTTPSPQNISNCRYAQTPANMFYIVACDNRDQRRDPPQYPVVPVHLDRII.

An N-terminal signal peptide occupies residues 1–27; it reads MVPKLFTSQICLLLLLGLLAVEGSLHV. A glycan (C-linked (Man) tryptophan) is linked at Trp34. Residue His42 is the Proton acceptor of the active site. Asn44 carries N-linked (GlcNAc...) asparagine glycosylation. 4 disulfides stabilise this stretch: Cys50–Cys110, Cys64–Cys123, Cys82–Cys138, and Cys89–Cys98. 3'-nitrotyrosine is present on Tyr60. A substrate-binding site is contributed by 65-69; that stretch reads KNQNT. 4 N-linked (GlcNAc...) asparagine glycosylation sites follow: Asn86, Asn92, Asn111, and Asn119. The active-site Proton donor is His156.

It belongs to the pancreatic ribonuclease family. Interacts with and forms a tight 1:1 complex with RNH1. Dimerization of two such complexes may occur.

It localises to the lysosome. The protein resides in the cytoplasmic granule. It carries out the reaction an [RNA] containing cytidine + H2O = an [RNA]-3'-cytidine-3'-phosphate + a 5'-hydroxy-ribonucleotide-3'-[RNA].. The catalysed reaction is an [RNA] containing uridine + H2O = an [RNA]-3'-uridine-3'-phosphate + a 5'-hydroxy-ribonucleotide-3'-[RNA].. Its function is as follows. This is a non-secretory ribonuclease. It is a pyrimidine specific nuclease with a slight preference for U. Cytotoxin and helminthotoxin. Possesses a wide variety of biological activities. The protein is Non-secretory ribonuclease (RNASE2) of Gorilla gorilla gorilla (Western lowland gorilla).